The following is a 429-amino-acid chain: Light-independent protochlorophyllide reductase subunit N (429 aa).

3 residues coordinate [4Fe-4S] cluster: cysteine 32, cysteine 57, and cysteine 118.

The protein belongs to the BchN/ChlN family. As to quaternary structure, protochlorophyllide reductase is composed of three subunits; BchL, BchN and BchB. Forms a heterotetramer of two BchB and two BchN subunits. [4Fe-4S] cluster is required as a cofactor.

It catalyses the reaction chlorophyllide a + oxidized 2[4Fe-4S]-[ferredoxin] + 2 ADP + 2 phosphate = protochlorophyllide a + reduced 2[4Fe-4S]-[ferredoxin] + 2 ATP + 2 H2O. It participates in porphyrin-containing compound metabolism; bacteriochlorophyll biosynthesis (light-independent). In terms of biological role, component of the dark-operative protochlorophyllide reductase (DPOR) that uses Mg-ATP and reduced ferredoxin to reduce ring D of protochlorophyllide (Pchlide) to form chlorophyllide a (Chlide). This reaction is light-independent. The NB-protein (BchN-BchB) is the catalytic component of the complex. This Rhodopseudomonas palustris (strain TIE-1) protein is Light-independent protochlorophyllide reductase subunit N.